We begin with the raw amino-acid sequence, 706 residues long: K(+)-insensitive pyrophosphate-energized proton pump (706 aa).

A run of 5 helical transmembrane segments spans residues methionine 1–alanine 21, isoleucine 62–isoleucine 82, glycine 83–valine 103, glycine 128–tyrosine 148, and valine 164–phenylalanine 184. Lysine 186 is a binding site for substrate. Positions 189, 193, 216, and 219 each coordinate Mg(2+). The next 6 helical transmembrane spans lie at leucine 231–alanine 251, threonine 261–valine 281, isoleucine 298–phenylalanine 318, glycine 328–isoleucine 348, isoleucine 376–leucine 398, and alanine 412–valine 432. Aspartate 434 is a Mg(2+) binding site. The next 4 membrane-spanning stretches (helical) occupy residues alanine 465 to alanine 485, tyrosine 516 to methionine 536, isoleucine 585 to isoleucine 605, and alanine 616 to isoleucine 636. Ca(2+) is bound by residues aspartate 646, aspartate 672, and aspartate 676. Lysine 679 is a substrate binding site. A helical transmembrane segment spans residues alanine 685 to alanine 705.

This sequence belongs to the H(+)-translocating pyrophosphatase (TC 3.A.10) family. K(+)-insensitive subfamily. Homodimer. Mg(2+) serves as cofactor.

The protein resides in the cell inner membrane. It catalyses the reaction diphosphate + H2O + H(+)(in) = 2 phosphate + 2 H(+)(out). Proton pump that utilizes the energy of pyrophosphate hydrolysis as the driving force for proton movement across the membrane. Generates a proton motive force. The polypeptide is K(+)-insensitive pyrophosphate-energized proton pump (Bradyrhizobium diazoefficiens (strain JCM 10833 / BCRC 13528 / IAM 13628 / NBRC 14792 / USDA 110)).